Consider the following 289-residue polypeptide: ATP synthase mitochondrial F1 complex assembly factor 2 (289 aa).

The transit peptide at 1–40 (MWRRCLRLRDVGRRLLNLPRSGLTASEGLGPKLPTPIRAY) directs the protein to the mitochondrion. Lys133 is modified (N6-succinyllysine).

This sequence belongs to the ATP12 family. Interacts with ATP5F1B; involved in the assembly of the F1 component of the mitochondrial ATP synthase (ATPase). Interacts with FMC1.

It localises to the mitochondrion inner membrane. Its function is as follows. Plays a role in the assembly of the F1 component of the mitochondrial ATP synthase (ATPase). The protein is ATP synthase mitochondrial F1 complex assembly factor 2 (ATPAF2) of Bos taurus (Bovine).